Here is a 977-residue protein sequence, read N- to C-terminus: Synaptopodin 2-like protein (977 aa).

The PDZ domain maps to 6–88 (EVLVTLSGGA…QLVLTVQRLA (83 aa)). 3 disordered regions span residues 91–226 (GPVQ…GPLR), 317–352 (AGTGAEEEDGVPPTSESELDEEAFSDARSLTNQSDW), and 364–677 (AGSR…EDAL). Residues S108 and S111 each carry the phosphoserine modification. Over residues 109-123 (PLSPEPPGAPVPQPL) the composition is skewed to pro residues. Residue T141 is modified to Phosphothreonine. Phosphoserine is present on residues S143, S178, and S180. Pro residues predominate over residues 183–192 (EPAPTIPGPP). Positions 194 to 203 (QGDSRVSSPS) are enriched in polar residues. Residues 216 to 226 (EALLLPHGPLR) show a composition bias toward low complexity. S345, S350, S374, S381, and S384 each carry phosphoserine. An Omega-N-methylarginine modification is found at R386. A compositionally biased stretch (pro residues) spans 436–450 (PPSPLPAPVASPRPF). Omega-N-methylarginine occurs at positions 466, 469, and 479. The span at 510 to 525 (LSSQGPTPLPSFTSGV) shows a compositional bias: polar residues. Low complexity-rich tracts occupy residues 530–545 (PVSGSPSTPRSSGPVT) and 572–595 (SAAAMTSTASIFLSAPLRPSARPE). Residues 596–607 (APAPGPGAPEPP) are compositionally biased toward pro residues. Residues S670 and S678 each carry the phosphoserine modification. Residues 697–802 (TLPHVTPKTP…PSLPPSWKYS (106 aa)) are disordered. Pro residues predominate over residues 704 to 730 (KTPPPMAPKTPPPMTPKTPPPVAPKPP). Phosphothreonine occurs at positions 705 and 713. At R757 the chain carries Omega-N-methylarginine. Over residues 781–796 (GLGPRPRSPSPTPSLP) the composition is skewed to pro residues. Phosphoserine is present on residues S788 and S790. Position 792 is a phosphothreonine (T792). An omega-N-methylarginine mark is found at R806, R826, and R889. S891 is subject to Phosphoserine. 2 positions are modified to phosphothreonine: T892 and T898. R910 is modified (omega-N-methylarginine). R921 bears the Asymmetric dimethylarginine; alternate mark. Omega-N-methylarginine; alternate is present on R921. A disordered region spans residues 922 to 950 (TELASAPVPSPAPPPEAPRGLGASPSSCG). Positions 929–938 (VPSPAPPPEA) are enriched in pro residues. R955 and R957 each carry omega-N-methylarginine.

The protein belongs to the synaptopodin family.

The protein resides in the cytoplasm. It localises to the cytoskeleton. Functionally, actin-associated protein that may play a role in modulating actin-based shape. This chain is Synaptopodin 2-like protein (SYNPO2L), found in Homo sapiens (Human).